The sequence spans 54 residues: MVRLSYLRLILPPCRLSELSSLAILYQPVIPILISTITFQHFFKCVHTPCNVYI.

This is an uncharacterized protein from Saccharomyces cerevisiae (strain ATCC 204508 / S288c) (Baker's yeast).